Consider the following 563-residue polypeptide: Cytochrome P450 monooxygenase efuG (563 aa).

The helical transmembrane segment at 10 to 30 (ITSHQWGIGSVFLLISIPLIV) threads the bilayer. Residues 462–482 (PDDPQSGPRKDAKKQKAKSDG) form a disordered region. A heme-binding site is contributed by Cys505.

Belongs to the cytochrome P450 family. Heme is required as a cofactor.

It is found in the membrane. The protein operates within secondary metabolite biosynthesis; terpenoid biosynthesis. In terms of biological role, cytochrome P450 monooxygenase; part of the gene cluster that mediates the biosynthesis of enfumafungin, a glycosylated fernene-type triterpenoid with potent antifungal activity, mediated by its interaction with beta-1,3-glucan synthase and the fungal cell wall. The pathway begins with the terpene cyclase-glycosyl transferase fusion protein that most likely uses 2,3-oxidosqualene as substrate and catalyzes glycosylation immediately after cyclization. The fernene glycoside then could be processed by the desaturase efuI which catalyzes isomerization of a double bond established by efuA to form the core structure. The latter would then undergo a series of hydroxylations in unknown order at C-2, C-19, C-23 and C-25, which would be catalyzed by two of the three cytochrome P450 monooxygenases efuB, efuG or efuH. The hydroxy-group at C-25 becomes oxidized by the dehydrogenase efuE to enable a spontaneous, non-enzymatic hemiacetal formation with C-23. After hydroxylation at C-2, acetylation by the acetyltransferase efuC takes place. The final steps in enfumafungin biosynthesis require expansion of the 5-membered ring by lactonization via a Baeyer-Villiger reaction mediated by one of the BGC's cytochrome P450 monooxygenases (efuB, efuG or efuH) followed by ring cleavage. This type of reaction would establish a double bond between C-20 and C-21 which could be reduced by the reductase efuL to form the final product. This is Cytochrome P450 monooxygenase efuG from Hormonema carpetanum.